Here is a 332-residue protein sequence, read N- to C-terminus: tRNA-dihydrouridine synthase B (332 aa).

FMN-binding positions include 16–18 (PMA) and glutamine 70. The active-site Proton donor is cysteine 100. FMN is bound by residues lysine 139, 200 to 202 (NGD), and 224 to 225 (GR).

This sequence belongs to the Dus family. DusB subfamily. It depends on FMN as a cofactor.

It carries out the reaction a 5,6-dihydrouridine in tRNA + NAD(+) = a uridine in tRNA + NADH + H(+). The enzyme catalyses a 5,6-dihydrouridine in tRNA + NADP(+) = a uridine in tRNA + NADPH + H(+). Functionally, catalyzes the synthesis of 5,6-dihydrouridine (D), a modified base found in the D-loop of most tRNAs, via the reduction of the C5-C6 double bond in target uridines. In Xanthomonas axonopodis pv. citri (strain 306), this protein is tRNA-dihydrouridine synthase B.